Here is a 282-residue protein sequence, read N- to C-terminus: Flagellin (282 aa).

This sequence belongs to the bacterial flagellin family.

The protein localises to the secreted. The protein resides in the bacterial flagellum. In terms of biological role, flagellin is the subunit protein which polymerizes to form the filaments of bacterial flagella. The flagellum is required to cause a persistent disease in a murine model of infection. The protein is Flagellin (fliC) of Brucella melitensis biotype 1 (strain ATCC 23456 / CCUG 17765 / NCTC 10094 / 16M).